Here is a 232-residue protein sequence, read N- to C-terminus: Somatolactin (232 aa).

The first 16 residues, 1–16 (MHNWKGVWLCSLFLTF), serve as a signal peptide directing secretion. Disulfide bonds link Cys-31-Cys-41, Cys-91-Cys-206, and Cys-223-Cys-231. An N-linked (GlcNAc...) asparagine glycan is attached at Asn-147.

The protein belongs to the somatotropin/prolactin family. As to expression, pituitary gland.

Its subcellular location is the secreted. This chain is Somatolactin, found in Protopterus annectens (African lungfish).